We begin with the raw amino-acid sequence, 153 residues long: Large ribosomal subunit protein uL30 (153 aa).

The protein belongs to the universal ribosomal protein uL30 family. As to quaternary structure, part of the 50S ribosomal subunit.

In Methanosarcina barkeri (strain Fusaro / DSM 804), this protein is Large ribosomal subunit protein uL30.